The sequence spans 175 residues: Bifunctional protein PyrR (175 aa).

Substrate is bound by residues Thr40 to Arg41, Arg85, Asp102 to Thr110, Arg135, and Val159. A PRPP-binding motif is present at residues Val98–Thr110.

This sequence belongs to the purine/pyrimidine phosphoribosyltransferase family. PyrR subfamily. In terms of assembly, homodimer and homohexamer; in equilibrium.

It carries out the reaction UMP + diphosphate = 5-phospho-alpha-D-ribose 1-diphosphate + uracil. Regulates transcriptional attenuation of the pyrimidine nucleotide (pyr) operon by binding in a uridine-dependent manner to specific sites on pyr mRNA. This disrupts an antiterminator hairpin in the RNA and favors formation of a downstream transcription terminator, leading to a reduced expression of downstream genes. In terms of biological role, also displays a weak uracil phosphoribosyltransferase activity which is not physiologically significant. This is Bifunctional protein PyrR from Staphylococcus epidermidis (strain ATCC 35984 / DSM 28319 / BCRC 17069 / CCUG 31568 / BM 3577 / RP62A).